Reading from the N-terminus, the 384-residue chain is UDP-galactopyranose mutase (384 aa).

Positions 1-23 (MKSKKILIVGAGFSGAVIGRQLA) are cleaved as a signal peptide. FAD is bound by residues Ser14, 33 to 34 (DQ), Asn41, and 60 to 61 (HI). Asn84, Phe151, Thr156, Trp160, and Tyr185 together coordinate UDP-alpha-D-galactose. Phe219 lines the FAD pocket. 3 residues coordinate UDP-alpha-D-galactose: Asn270, Arg280, and Tyr314. Arg343 is a binding site for FAD. Tyr349 is a binding site for UDP-alpha-D-galactose. 350–355 (LDMDVT) contributes to the FAD binding site.

Belongs to the UDP-galactopyranose/dTDP-fucopyranose mutase family. Homodimer. The cofactor is FAD.

The catalysed reaction is UDP-alpha-D-galactose = UDP-alpha-D-galactofuranose. It participates in bacterial outer membrane biogenesis; LPS O-antigen biosynthesis. Involved in the biosynthesis of the galactose-containing O-side-chain polysaccharide backbone structure of D-galactan I which is a key component of lipopolysaccharide (LPS). Catalyzes the interconversion through a 2-keto intermediate of uridine diphosphogalactopyranose (UDP-GalP) into uridine diphosphogalactofuranose (UDP-GalF) which is the biosynthetic precursor of galactofuranosyl residues. In Klebsiella pneumoniae, this protein is UDP-galactopyranose mutase (rfbD).